Consider the following 451-residue polypeptide: Prenyltransferase asqH1 (451 aa).

Residues 14–37 (AEDQSTRKVHWGQEGSGQSPEARP) form a disordered region. E120 provides a ligand contact to L-tryptophan. Substrate is bound by residues R137, R274, K276, Y278, and Y373.

This sequence belongs to the tryptophan dimethylallyltransferase family.

The enzyme catalyses quinolinone B + dimethylallyl diphosphate = peniprequinolone + diphosphate. It functions in the pathway secondary metabolite biosynthesis. It participates in alkaloid biosynthesis. The protein operates within mycotoxin biosynthesis. In terms of biological role, prenyltransferase; part of the gene cluster that mediates the biosynthesis of the aspoquinolone mycotoxins. Within the pathway, the prenyltransferase asqH1 catalyzes the canonical Friedel-Crafts alkylation of quinolinone B with dimethylallyl cation to yield dimethylallyl quinolone. The first step of the pathway is catalyzed by the nonribosomal peptide synthetase asqK that condenses anthranilic acid and O-methyl-L-tyrosine to produce 4'-methoxycyclopeptin. 4'-methoxycyclopeptin is then converted to 4'-methoxydehydrocyclopeptin by the ketoglutarate-dependent dioxygenase asqJ. AsqJ also converts its first product 4'-methoxydehydrocyclopeptin to 4'-methoxycyclopenin. The following conversion of 4'-methoxycyclopenin into 4'-methoxyviridicatin is catalyzed by the cyclopenase asqI. 4'-methoxyviridicatin is the precursor of quinolone natural products, and is further converted to quinolinone B. The prenyltransferase asqH1 then catalyzes the canonical Friedel-Crafts alkylation of quinolinone B with dimethylallyl cation to yield dimethylallyl quinolone, which is subjected to FAD-dependent dehydrogenation by the FAD-linked oxidoreductase asqF to yield conjugated aryl diene. The delta(3') double bond then serves as the site of the second alkylation with DMAPP catalyzed by the prenyltransferase asqH2 to yield a carbenium ion intermediate, which can be attacked by H(2)O to yield a styrenyl quinolone containing a C3'-hydroxyprenyl chain. The FAD-dependent monooxygenase asqG performs epoxidation of the terminal C7'-C8' olefin. Finally, after dehydratation of the epoxide at C3 by asqC, the quinolone epoxide rearrangement protein asqO catalyzes an enzymatic 3-exo-tet cyclization to yield the cyclopropyl-THF ring system in aspoquinolone. The protein is Prenyltransferase asqH1 of Emericella nidulans (strain FGSC A4 / ATCC 38163 / CBS 112.46 / NRRL 194 / M139) (Aspergillus nidulans).